A 252-amino-acid chain; its full sequence is Hydroxyacylglutathione hydrolase (252 aa).

Zn(2+)-binding residues include His52, His54, Asp56, His57, His107, Asp128, and His166.

Belongs to the metallo-beta-lactamase superfamily. Glyoxalase II family. Monomer. The cofactor is Zn(2+).

The enzyme catalyses an S-(2-hydroxyacyl)glutathione + H2O = a 2-hydroxy carboxylate + glutathione + H(+). It functions in the pathway secondary metabolite metabolism; methylglyoxal degradation; (R)-lactate from methylglyoxal: step 2/2. Its function is as follows. Thiolesterase that catalyzes the hydrolysis of S-D-lactoyl-glutathione to form glutathione and D-lactic acid. The sequence is that of Hydroxyacylglutathione hydrolase from Neisseria meningitidis serogroup C / serotype 2a (strain ATCC 700532 / DSM 15464 / FAM18).